The chain runs to 1464 residues: MSQDDEIVMRDVTSAGICIGDRIGREAASQLDLEEALEASRYASHPYSTHPREWPPLIEVGETWELPSVLIERYNTAGGEGTALCGIFPEIRRAWASVDNSLFLWRFDKRDGQCPEYSGEEQAICAVGLAKCRPGVFVEAIQYLLVLATPVELVLVGVCCTEGPDGRDPYAEISVQPLPDYTISSDGVTMTCVTCTNKGRIFMAGRDGHIYELLYTTGSGWNKRCRKVCLTAGVGSMISRWVVPNVFKFGAVDPVVEMVVDNERQILYARTEEMKLQAYVSGPNGEGPLKKVAEERNLLNQKDLSQGNRQSAVAGRSNKPSIVSISPLSMLESKWLHLVAALSDGRRMYLSTSSSGSGSTISFSGFNNHRQTPNCLKVVSTRPSPPLGVGVGLGFGAASVAGRTQNDDLSMKIETAYYSVGTLVLSDSSPPAMSSLLVVSRDSSVHSQAGSSSGPSSRSSRALREVVSSLPIEGRMLFVADVLPSPDTAATIQSLYSELEYCGVEVSGESYEKACGKLWARSDLSTQHILPRRKIVVFTTMGMMELVFNRPVDILRRLLESNSPRSLLEDFFTRFGVGEAAAMCLMLAARIINFEDLISNIVADKAAEAFEDPRIVGMPQFDGSSGLSNTRTATGGFSMGQVVQEAEPIFSGAHEGLCLCTSRLLFPLWELPVMSKKTSSDTMSEDGVVICRLSTSAMHVLESKIRSLEKFLRSRRNQRRGLYGCVAGLGDVTGSILYGTGSELGATERNMVRNLFGAYSNGGESANKRQRLPYSPAELAATEVRAMECIRQLLLRSAEALFLLQLLSQHHVARLVQELDANLKQALVQLTFHQLVCSEEGDQIATRLISAVMEYYTGSDGRGTVDDISPRLREGCPSYFKESDYKFYLAVERLERAALTSDAEEKENVAREAFSFLSKVPGSADLQTVCKRFEDLRFYEAVVCLPLQKAQALDPAGDAFNDQLDASIREHALAQRKQCYEIIANALRSLASPLASPTLDEASRSQYICQIVHLGVQSTDRAFREYLYKAMIELHLENELLEYGGPDLVPFLQNAGSHSESQVGAVSTGSSPLGHSGTQISSDQAKYFDLLAKYYVSKRQHVLAAHVFLRLAERRAISLGDSPTLERRRDDLSQAVLQAKNASNSDGLVGSAQGVSDSGLLDLLEGKLAVLQFQIKIRDKLEAIASNFESSVAMQDSDQNGQVLDGDSSDDTNLANAANEMAMEVSSELKSVTQLYNEYAVPFELWEICLEMLYFANYSGDADSSIIRETWARLIDQALSQGGIREACAVLKRVGSHIYPGDGVVLPLDVLCLHLERAALERSERIENVRDEDIAKALLAACKGAAEPVLNAYDRLLSNAAVVPSPNLRIRLLRSVLVVLREWAMSVLSDRMGSSPTRSSLILGGSFALENKAALNQGARDKIANAANRYMTEVRRLALPPNKTDGVYAGFKELDESLLSPFSF.

Residue S2 is modified to N-acetylserine.

Belongs to the non-repetitive/WGA-negative nucleoporin family. As to quaternary structure, part of the nuclear pore complex (NPC). The NPC has an eight-fold symmetrical structure comprising a central transport channel and two rings, the cytoplasmic and nuclear rings, to which eight filaments are attached. The cytoplasmic filaments have loose ends, while the nuclear filaments are joined in a distal ring, forming a nuclear basket. NPCs are highly dynamic in configuration and composition, and can be devided in 3 subcomplexes, the NUP62 subcomplex, the NUP107-160 subcomplex and the NUP93 subcomplex, containing approximately 30 different nucleoporin proteins.

It localises to the nucleus. The protein localises to the nuclear pore complex. Major component of the nuclear pore complex (NPC). This Arabidopsis thaliana (Mouse-ear cress) protein is Nuclear pore complex protein NUP155.